Here is a 718-residue protein sequence, read N- to C-terminus: Polyribonucleotide nucleotidyltransferase (718 aa).

Positions 496 and 502 each coordinate Mg(2+). The KH domain occupies 563–622; sequence PRLLTIKIDSDMIGLVIGPGGKTIKGITEETGAKIDIEDDGTVTISAVDENKAKRARNII. An S1 motif domain is found at 632–700; that stretch reads GDVYAGRITR…NKGRINLTRL (69 aa).

The protein belongs to the polyribonucleotide nucleotidyltransferase family. Mg(2+) is required as a cofactor.

It localises to the cytoplasm. It carries out the reaction RNA(n+1) + phosphate = RNA(n) + a ribonucleoside 5'-diphosphate. In terms of biological role, involved in mRNA degradation. Catalyzes the phosphorolysis of single-stranded polyribonucleotides processively in the 3'- to 5'-direction. The polypeptide is Polyribonucleotide nucleotidyltransferase (Nostoc punctiforme (strain ATCC 29133 / PCC 73102)).